The primary structure comprises 93 residues: Small ribosomal subunit protein uS19 (93 aa).

Belongs to the universal ribosomal protein uS19 family.

Its function is as follows. Protein S19 forms a complex with S13 that binds strongly to the 16S ribosomal RNA. The sequence is that of Small ribosomal subunit protein uS19 from Clavibacter michiganensis subsp. michiganensis (strain NCPPB 382).